Here is a 290-residue protein sequence, read N- to C-terminus: Arylamine N-acetyltransferase 2 (290 aa).

Cys-68 (acyl-thioester intermediate) is an active-site residue. Residues Ser-103 and Gly-104 each contribute to the CoA site. Position 106 to 107 (106 to 107 (IH)) interacts with substrate. Residues His-107 and Asp-122 contribute to the active site. CoA is bound at residue Tyr-208.

The protein belongs to the arylamine N-acetyltransferase family.

It localises to the cytoplasm. It carries out the reaction an arylamine + acetyl-CoA = an N-acetylarylamine + CoA. It catalyses the reaction an N-hydroxyarylamine + acetyl-CoA = an N-acetoxyarylamine + CoA. Functionally, catalyzes the N- or O-acetylation of various arylamine and heterocyclic amine substrates, and participates in the detoxification of a plethora of hydrazine and arylamine drugs. This chain is Arylamine N-acetyltransferase 2 (NAT2), found in Mesocricetus auratus (Golden hamster).